A 650-amino-acid polypeptide reads, in one-letter code: Protein ANTI-SILENCING 1 (650 aa).

The region spanning 38-169 is the BAH domain; the sequence is DEYRLYDCVL…VGSCKVVDTI (132 aa). 4 disordered regions span residues 202-223, 229-248, 257-359, and 425-448; these read NGKS…GSVR, AFES…EKEK, KSTL…QKLD, and VTEK…ADDN. Composition is skewed to basic and acidic residues over residues 259–270 and 277–287; these read TLAEERSNKDSG and NGKDQESEVKK. Residues 302–315 are compositionally biased toward polar residues; sequence SNSFEASGSRTIHS. Composition is skewed to basic and acidic residues over residues 348 to 358 and 438 to 448; these read LDDRPLKKQKL and RAEDKMSADDN. The region spanning 486–569 is the RRM domain; the sequence is TVVLLQNLDP…RPLVASFAKI (84 aa).

Component of the ASI1-AIPP1-EDM2 (AAE) RNA regulatory complex composed of at least AIPP1/EDM3, ASI1 and EDM2 and may contain CPL2, AIPP2 and AIPP3/BDT1. Binds directly to AIPP1/EDM3 and AIPP2.

Functionally, collaboratively with AIPP1/EDM3 and EDM2, the AAE complex regulates alternative RNA processing (e.g. alternative splicing) and epigenetic silencing (e.g. H3K9me2) of intronic heterochromatin-containing genes as well as genic heterochromatin-containing genes by promoting distal 3' polyadenylation; may associate with intronic heterochromatin and bind gene transcripts to modulate polyadenylation. Required to prevent promoter DNA hypermethylation and transcriptional silencing of some transgenes. Plays a similar role to that of the histone H3K9 demethylase JMJ25/IBM1 in preventing CHG methylation in the bodies of numerous genes. RNA-binding protein that ensures the proper expression of JMJ25/IBM1 full-length transcript by associating with an intronic heterochromatic repeat element of JMJ25/IBM1. Also modulates transposable elements (TE) expression. Contributes to a unique mechanism to deal with the collateral effect of silencing intronic repeat elements. This Arabidopsis thaliana (Mouse-ear cress) protein is Protein ANTI-SILENCING 1.